The sequence spans 166 residues: UPF0251 protein UNCMA_27150 (166 aa).

Belongs to the UPF0251 family.

This is UPF0251 protein UNCMA_27150 from Methanocella arvoryzae (strain DSM 22066 / NBRC 105507 / MRE50).